The sequence spans 357 residues: UDP-N-acetylglucosamine--N-acetylmuramyl-(pentapeptide) pyrophosphoryl-undecaprenol N-acetylglucosamine transferase (357 aa).

Residues 12 to 14, N124, R162, S190, I243, 262 to 267, and Q288 each bind UDP-N-acetyl-alpha-D-glucosamine; these read TGG and ALTVAE.

It belongs to the glycosyltransferase 28 family. MurG subfamily.

It is found in the cell inner membrane. The catalysed reaction is di-trans,octa-cis-undecaprenyl diphospho-N-acetyl-alpha-D-muramoyl-L-alanyl-D-glutamyl-meso-2,6-diaminopimeloyl-D-alanyl-D-alanine + UDP-N-acetyl-alpha-D-glucosamine = di-trans,octa-cis-undecaprenyl diphospho-[N-acetyl-alpha-D-glucosaminyl-(1-&gt;4)]-N-acetyl-alpha-D-muramoyl-L-alanyl-D-glutamyl-meso-2,6-diaminopimeloyl-D-alanyl-D-alanine + UDP + H(+). It participates in cell wall biogenesis; peptidoglycan biosynthesis. Functionally, cell wall formation. Catalyzes the transfer of a GlcNAc subunit on undecaprenyl-pyrophosphoryl-MurNAc-pentapeptide (lipid intermediate I) to form undecaprenyl-pyrophosphoryl-MurNAc-(pentapeptide)GlcNAc (lipid intermediate II). In Alcanivorax borkumensis (strain ATCC 700651 / DSM 11573 / NCIMB 13689 / SK2), this protein is UDP-N-acetylglucosamine--N-acetylmuramyl-(pentapeptide) pyrophosphoryl-undecaprenol N-acetylglucosamine transferase.